A 453-amino-acid polypeptide reads, in one-letter code: Ribulose bisphosphate carboxylase large chain (453 aa).

The propeptide occupies 1–2 (MS). Position 3 is an N-acetylproline (proline 3). Position 14 is an N6,N6,N6-trimethyllysine (lysine 14). Residues asparagine 123 and threonine 173 each contribute to the substrate site. Residue lysine 175 is the Proton acceptor of the active site. Lysine 177 contributes to the substrate binding site. Lysine 201, aspartate 203, and glutamate 204 together coordinate Mg(2+). N6-carboxylysine is present on lysine 201. Residue histidine 294 is the Proton acceptor of the active site. Substrate-binding residues include arginine 295, histidine 327, and serine 379.

This sequence belongs to the RuBisCO large chain family. Type I subfamily. Heterohexadecamer of 8 large chains and 8 small chains; disulfide-linked. The disulfide link is formed within the large subunit homodimers. The cofactor is Mg(2+). Post-translationally, the disulfide bond which can form in the large chain dimeric partners within the hexadecamer appears to be associated with oxidative stress and protein turnover.

It is found in the plastid. The protein localises to the chloroplast. The catalysed reaction is 2 (2R)-3-phosphoglycerate + 2 H(+) = D-ribulose 1,5-bisphosphate + CO2 + H2O. It catalyses the reaction D-ribulose 1,5-bisphosphate + O2 = 2-phosphoglycolate + (2R)-3-phosphoglycerate + 2 H(+). In terms of biological role, ruBisCO catalyzes two reactions: the carboxylation of D-ribulose 1,5-bisphosphate, the primary event in carbon dioxide fixation, as well as the oxidative fragmentation of the pentose substrate in the photorespiration process. Both reactions occur simultaneously and in competition at the same active site. The sequence is that of Ribulose bisphosphate carboxylase large chain from Galium parisiense (Wall bedstraw).